Here is a 433-residue protein sequence, read N- to C-terminus: MGQELCAKRLQPGCSCYHRSEGGEAHSCQRSQPGSTEPAVFELTEASSSTASFHPRGLEAASAQKLKSKRPRSNSDSFQEENLRQGLPWKKSLPFGAASSYLNLEKLGEGSYAKVYKGISRINGQLVALKVISMNAEEGVPFTAIREASLLKGLKHANIVLLHDIVHTKETLTFVFEYMHTDLAQYMSQHPGGLHPHNVRLFMFQLLRGLAYIHHQRVLHRDLKPQNLLLSHLGELKLADFGLARAKSIPSQTYSSEVVTLWYRPPDALLGATEYSSELDIWGAGCIFIEMFQGQPLFPGVSNILEQLEKIWEVLGVPTEDTWPGVSKLPNYNPEWFPPPKPQSLQIVWDRLGGVPEAEDLASQMLKGFPRDRVSAQEALVHDYFSVLPSQLYQLPDEESLFAVSGVKLKPEMCDLSASYRKRHHLVGVNKCW.

The segment at 46–83 (ASSSTASFHPRGLEAASAQKLKSKRPRSNSDSFQEENL) is disordered. In terms of domain architecture, Protein kinase spans 52 to 336 (SFHPRGLEAA…SKLPNYNPEW (285 aa)). ATP contacts are provided by residues 58 to 66 (LEAASAQKL) and glutamate 81. Residue threonine 173 is the Proton acceptor of the active site.

The protein belongs to the protein kinase superfamily. CMGC Ser/Thr protein kinase family. CDC2/CDKX subfamily. It depends on Mg(2+) as a cofactor.

It catalyses the reaction L-seryl-[protein] + ATP = O-phospho-L-seryl-[protein] + ADP + H(+). The enzyme catalyses L-threonyl-[protein] + ATP = O-phospho-L-threonyl-[protein] + ADP + H(+). Its function is as follows. Serine/threonine-protein kinase that acts like an antiapoptotic protein that counters TRAIL/TNFSF10-induced apoptosis by inducing phosphorylation of BIRC5 at 'Thr-34'. The polypeptide is Cyclin-dependent kinase 15 (Cdk15) (Mus musculus (Mouse)).